The chain runs to 1347 residues: Probable serine/threonine-protein kinase DDB_G0288147 (1347 aa).

The Phorbol-ester/DAG-type zinc finger occupies 12-67 (NHRFEPYTLKHLTICKRCEKEIIGVSNSAQICYSCKNIYHTRCCKEIETKKLELIC). Disordered stretches follow at residues 262-316 (PFNE…LNES), 333-402 (SNNS…KSSK), and 463-485 (DNNNNNNNNNNNNNNNSNNNNNN). Over residues 271 to 282 (DSTLSASTYNRR) the composition is skewed to polar residues. Composition is skewed to low complexity over residues 286–316 (KNKNSNKNNTSSSSSAPASASSSKHSNLNES), 333–342 (SNNSNNLAAL), and 350–361 (TTTTTTTTTTTT). Basic residues-rich tracts occupy residues 366 to 382 (NNHHHHQHHHQNSKSRK) and 389 to 402 (NKKKIKSPKNKSSK). Positions 464-485 (NNNNNNNNNNNNNNNSNNNNNN) are enriched in low complexity. The Protein kinase domain maps to 599 to 854 (VKINVEIYDS…EILKVFYSLL (256 aa)). Residues 605 to 613 (IYDSPLCTV) and lysine 626 contribute to the ATP site. Catalysis depends on aspartate 724, which acts as the Proton acceptor. Disordered stretches follow at residues 937-1241 (SERK…IVNP) and 1282-1310 (SSDSSNSLSDPESEEYSMPIKRSSSIRSP). Residues 976–986 (IIDDDDDDDDD) show a composition bias toward acidic residues. Composition is skewed to low complexity over residues 1004–1015 (NINSENKNNNNV) and 1024–1062 (SSNSNNNNNNNNNNNNNNNNNNNNNNNNNNSNNNNNNNN). Polar residues-rich tracts occupy residues 1063–1083 (LRQNQFLGNDLNKSQDNNQLM) and 1118–1127 (LSSSQTSEIG). 2 stretches are compositionally biased toward low complexity: residues 1128 to 1241 (DNNT…IVNP) and 1282 to 1291 (SSDSSNSLSD).

This sequence belongs to the protein kinase superfamily. TKL Ser/Thr protein kinase family.

The catalysed reaction is L-seryl-[protein] + ATP = O-phospho-L-seryl-[protein] + ADP + H(+). The enzyme catalyses L-threonyl-[protein] + ATP = O-phospho-L-threonyl-[protein] + ADP + H(+). The sequence is that of Probable serine/threonine-protein kinase DDB_G0288147 from Dictyostelium discoideum (Social amoeba).